We begin with the raw amino-acid sequence, 488 residues long: Photosystem II CP43 reaction center protein (488 aa).

A propeptide spanning residues 1–29 (MTKVFALGWLLKINLMKTLYSLRRFYHVE) is cleaved from the precursor. Transmembrane regions (helical) follow at residues 84-108 (LFEVAHFVPEKPLYEQGFILIPHLA), 149-170 (LIGPDTLEESFPFFGYDWRDKN), 193-215 (KALFIGGVYDTWAPGGGDVRFVS), 270-290 (KPFAWARRAFVWSGEAYLSYS), and 306-327 (WYNNTAYPSEFYGPTGPEASQA). Glu382 is a binding site for [CaMn4O5] cluster. The helical transmembrane segment at 462-486 (RARAAAAGFEKGINRENEPVLSMRP) threads the bilayer.

This sequence belongs to the PsbB/PsbC family. PsbC subfamily. In terms of assembly, PSII is composed of 1 copy each of membrane proteins PsbA, PsbB, PsbC, PsbD, PsbE, PsbF, PsbH, PsbI, PsbJ, PsbK, PsbL, PsbM, PsbT, PsbX, PsbY, PsbZ, Psb30/Ycf12, at least 3 peripheral proteins of the oxygen-evolving complex and a large number of cofactors. It forms dimeric complexes. Binds multiple chlorophylls and provides some of the ligands for the Ca-4Mn-5O cluster of the oxygen-evolving complex. It may also provide a ligand for a Cl- that is required for oxygen evolution. PSII binds additional chlorophylls, carotenoids and specific lipids. serves as cofactor.

It localises to the plastid. The protein localises to the chloroplast thylakoid membrane. In terms of biological role, one of the components of the core complex of photosystem II (PSII). It binds chlorophyll and helps catalyze the primary light-induced photochemical processes of PSII. PSII is a light-driven water:plastoquinone oxidoreductase, using light energy to abstract electrons from H(2)O, generating O(2) and a proton gradient subsequently used for ATP formation. The protein is Photosystem II CP43 reaction center protein of Pyropia yezoensis (Susabi-nori).